A 910-amino-acid chain; its full sequence is Protein translocase subunit SecA (910 aa).

Residues Gln86, 104-108 (GEGKT), and Asp499 each bind ATP. Zn(2+) is bound by residues Cys894, Cys896, Cys905, and His906.

The protein belongs to the SecA family. As to quaternary structure, monomer and homodimer. Part of the essential Sec protein translocation apparatus which comprises SecA, SecYEG and auxiliary proteins SecDF-YajC and YidC. It depends on Zn(2+) as a cofactor.

It localises to the cell inner membrane. The protein localises to the cytoplasm. The enzyme catalyses ATP + H2O + cellular proteinSide 1 = ADP + phosphate + cellular proteinSide 2.. Functionally, part of the Sec protein translocase complex. Interacts with the SecYEG preprotein conducting channel. Has a central role in coupling the hydrolysis of ATP to the transfer of proteins into and across the cell membrane, serving both as a receptor for the preprotein-SecB complex and as an ATP-driven molecular motor driving the stepwise translocation of polypeptide chains across the membrane. The sequence is that of Protein translocase subunit SecA from Rickettsia bellii (strain RML369-C).